A 411-amino-acid polypeptide reads, in one-letter code: LL-diaminopimelate aminotransferase (411 aa).

Substrate contacts are provided by Tyr15 and Gly42. Residues Tyr72, 108 to 109, Tyr132, Asn187, Tyr218, and 246 to 248 each bind pyridoxal 5'-phosphate; these read SK and SFS. Substrate contacts are provided by Lys109, Tyr132, and Asn187. Lys249 carries the N6-(pyridoxal phosphate)lysine modification. The pyridoxal 5'-phosphate site is built by Arg257 and Asn292. Substrate-binding residues include Asn292 and Arg388.

Belongs to the class-I pyridoxal-phosphate-dependent aminotransferase family. LL-diaminopimelate aminotransferase subfamily. In terms of assembly, homodimer. Pyridoxal 5'-phosphate serves as cofactor.

The enzyme catalyses (2S,6S)-2,6-diaminopimelate + 2-oxoglutarate = (S)-2,3,4,5-tetrahydrodipicolinate + L-glutamate + H2O + H(+). It functions in the pathway amino-acid biosynthesis; L-lysine biosynthesis via DAP pathway; LL-2,6-diaminopimelate from (S)-tetrahydrodipicolinate (aminotransferase route): step 1/1. Involved in the synthesis of meso-diaminopimelate (m-DAP or DL-DAP), required for both lysine and peptidoglycan biosynthesis. Catalyzes the direct conversion of tetrahydrodipicolinate to LL-diaminopimelate. This is LL-diaminopimelate aminotransferase from Synechococcus elongatus (strain ATCC 33912 / PCC 7942 / FACHB-805) (Anacystis nidulans R2).